The sequence spans 80 residues: FXYD domain-containing ion transport regulator 7 (80 aa).

The Extracellular segment spans residues 1–22 (MATPTQSPTNVPEETDPFFYDY). Thr3, Thr5, and Thr9 each carry an O-linked (GlcNAc) threonine glycan. The helical transmembrane segment at 23-45 (ATVQTVGMTLATIMFVLGIIIIL) threads the bilayer. Topologically, residues 46–80 (SKKVKCRKADSRSESPTCKSCKSELPSSAPGGGGV) are cytoplasmic. A disordered region spans residues 55–80 (DSRSESPTCKSCKSELPSSAPGGGGV). Ser73 is subject to Phosphoserine.

The protein belongs to the FXYD family. As to quaternary structure, regulatory subunit of the sodium/potassium-transporting ATPase which is composed of a catalytic alpha subunit, a non-catalytic beta subunit and an additional regulatory subunit. The regulatory subunit, a member of the FXYD protein family, modulates the enzymatic activity in a tissue- and isoform-specific way by changing affinities of the Na+/K+-ATPase toward Na(+), K(+) or ATP. Post-translationally, O-glycosylated; required for stabilization and translocation to the plasma membrane.

The protein localises to the cell membrane. In terms of biological role, associates with and regulates the activity of the sodium/potassium-transporting ATPase (NKA) which catalyzes the hydrolysis of ATP coupled with the exchange of Na(+) and K(+) ions across the plasma membrane. Reduces the apparent affinity for external K(+), an effect that depends on the presence of external Na(+) and voltage. Increases the apparent affinity for intracellular Na(+). In Mus musculus (Mouse), this protein is FXYD domain-containing ion transport regulator 7 (Fxyd7).